Reading from the N-terminus, the 375-residue chain is SAP-like protein BP-73 (375 aa).

3 disordered regions span residues 46-113 (PNNH…VPGE), 130-233 (RARG…VKFQ), and 257-315 (TLEN…PSLQ). Positions 59–70 (HQKGGSARRKSK) are enriched in basic residues. The span at 76–86 (DDSENIDEFDT) shows a compositional bias: acidic residues. Over residues 88–109 (IMSSKNGPPISLTSNSRPQATS) the composition is skewed to polar residues. 2 stretches are compositionally biased toward basic and acidic residues: residues 134 to 152 (KGKE…ERGS) and 163 to 186 (HSVD…KRSN). Residues 187–197 (ESGNKQNSSIF) show a composition bias toward polar residues. The span at 295 to 311 (DEPDASDTDEPSGEYDE) shows a compositional bias: acidic residues. Residues 338–375 (DLSTLKVTELRELAKSRGIKGYSKMKKNDLVELLSNMA) form an interaction with WAXY region.

In terms of assembly, binds to the DNA in the promoter region of WAXY containing the sequence 5'-ACGCACGCTAACGTGA-3'. As to expression, expressed in tissues with high cell division activities: in root tips, stem node, panicle, flower and immature seed. Weakly expressed in root and leaf.

Its function is as follows. May regulate cell proliferation and plant growth. This Oryza sativa subsp. japonica (Rice) protein is SAP-like protein BP-73 (BP-73).